The primary structure comprises 244 residues: Small ribosomal subunit protein uS2 (244 aa).

The interval 224–244 is disordered; the sequence is GQQGSDEAEEAEEAAEEVVAE. The span at 229–244 shows a compositional bias: acidic residues; that stretch reads DEAEEAEEAAEEVVAE.

The protein belongs to the universal ribosomal protein uS2 family.

This is Small ribosomal subunit protein uS2 from Desulfitobacterium hafniense (strain DSM 10664 / DCB-2).